Here is a 394-residue protein sequence, read N- to C-terminus: Phosphoglycerate kinase (394 aa).

Substrate is bound by residues 21 to 23 (DLN), Arg36, 60 to 63 (HLGN), Arg114, and Arg147. Residues Lys198, Glu315, and 341 to 344 (GGET) contribute to the ATP site.

It belongs to the phosphoglycerate kinase family. In terms of assembly, monomer.

The protein localises to the cytoplasm. The enzyme catalyses (2R)-3-phosphoglycerate + ATP = (2R)-3-phospho-glyceroyl phosphate + ADP. Its pathway is carbohydrate degradation; glycolysis; pyruvate from D-glyceraldehyde 3-phosphate: step 2/5. The sequence is that of Phosphoglycerate kinase from Wigglesworthia glossinidia brevipalpis.